Here is a 422-residue protein sequence, read N- to C-terminus: Tyrosine--tRNA ligase (422 aa).

Y37 lines the L-tyrosine pocket. A 'HIGH' region motif is present at residues 42 to 51; it reads PTEESLHIGH. Positions 175 and 179 each coordinate L-tyrosine. The 'KMSKS' region signature appears at 235 to 239; the sequence is KFGKT. Residue K238 participates in ATP binding. The S4 RNA-binding domain occupies 357 to 414; that stretch reads KDLQEALVLTSLAQSRTQAKNMIISNSISINTEKIRKNHIFHEKDKLFGKFTLLSRGK.

This sequence belongs to the class-I aminoacyl-tRNA synthetase family. TyrS type 1 subfamily. As to quaternary structure, homodimer.

It is found in the cytoplasm. The enzyme catalyses tRNA(Tyr) + L-tyrosine + ATP = L-tyrosyl-tRNA(Tyr) + AMP + diphosphate + H(+). Its function is as follows. Catalyzes the attachment of tyrosine to tRNA(Tyr) in a two-step reaction: tyrosine is first activated by ATP to form Tyr-AMP and then transferred to the acceptor end of tRNA(Tyr). This Buchnera aphidicola subsp. Acyrthosiphon pisum (strain Tuc7) protein is Tyrosine--tRNA ligase.